The sequence spans 442 residues: Elongation factor 1-alpha (442 aa).

The 224-residue stretch at 5-228 (KTHINIVVIG…DSVTPPERPV (224 aa)) folds into the tr-type G domain. Positions 14 to 21 (GHVDSGKS) are G1. Residue 14 to 21 (GHVDSGKS) participates in GTP binding. The G2 stretch occupies residues 70 to 74 (GITID). The segment at 91–94 (DAPG) is G3. GTP contacts are provided by residues 91–95 (DAPGH) and 153–156 (NKMD). A G4 region spans residues 153–156 (NKMD). The interval 192-194 (SGF) is G5.

Belongs to the TRAFAC class translation factor GTPase superfamily. Classic translation factor GTPase family. EF-Tu/EF-1A subfamily.

The protein localises to the cytoplasm. In terms of biological role, this protein promotes the GTP-dependent binding of aminoacyl-tRNA to the A-site of ribosomes during protein biosynthesis. This is Elongation factor 1-alpha from Entamoeba histolytica (strain ATCC 30459 / HM-1:IMSS / ABRM).